A 1171-amino-acid chain; its full sequence is Pyruvate-flavodoxin oxidoreductase (1171 aa).

4Fe-4S ferredoxin-type domains are found at residues 682–711 (EVPV…PALL) and 736–767 (YHLA…MQSL). [4Fe-4S] cluster is bound by residues cysteine 691, cysteine 694, cysteine 697, cysteine 701, cysteine 745, cysteine 748, cysteine 751, cysteine 755, cysteine 811, cysteine 814, cysteine 839, and cysteine 1072.

The protein belongs to the pyruvate:ferredoxin/flavodoxin oxidoreductase family. [4Fe-4S] cluster is required as a cofactor.

It carries out the reaction oxidized [flavodoxin] + pyruvate + CoA + 2 H(+) = reduced [flavodoxin] + acetyl-CoA + CO2. Functionally, oxidoreductase required for the transfer of electrons from pyruvate to flavodoxin, which reduces nitrogenase. This Klebsiella pneumoniae protein is Pyruvate-flavodoxin oxidoreductase (nifJ).